Reading from the N-terminus, the 473-residue chain is Phosphatidylserine synthase 1 (473 aa).

An N-acetylalanine modification is found at alanine 2. At alanine 2–aspartate 35 the chain is on the cytoplasmic side. A helical membrane pass occupies residues phenylalanine 36–phenylalanine 56. Residues alanine 57–glycine 72 lie on the Lumenal side of the membrane. The chain crosses the membrane as a helical span at residues isoleucine 73–phenylalanine 93. Over threonine 94–arginine 102 the chain is Cytoplasmic. A helical transmembrane segment spans residues methionine 103 to phenylalanine 123. Residues glutamate 124 to tyrosine 186 are Lumenal-facing. A helical membrane pass occupies residues glycine 187–leucine 207. The Cytoplasmic portion of the chain corresponds to proline 208–aspartate 216. A helical transmembrane segment spans residues glutamine 217–cysteine 237. Residues arginine 238–arginine 286 lie on the Lumenal side of the membrane. A helical membrane pass occupies residues valine 287–leucine 307. Topologically, residues lysine 308 to leucine 319 are cytoplasmic. Residues serine 320 to leucine 342 traverse the membrane as a helical segment. Residues threonine 343–tryptophan 355 are Lumenal-facing. Residues valine 356–phenylalanine 376 traverse the membrane as a helical segment. The Cytoplasmic portion of the chain corresponds to serine 377–tyrosine 383. A helical membrane pass occupies residues valine 384–tryptophan 404. The Lumenal segment spans residues tyrosine 405–lysine 473. 3 positions are modified to phosphoserine: serine 417, serine 425, and serine 454. The segment at aspartate 427–lysine 473 is disordered. Residues serine 455–serine 464 are compositionally biased toward basic residues.

It belongs to the phosphatidyl serine synthase family.

The protein localises to the endoplasmic reticulum membrane. It catalyses the reaction a 1,2-diacyl-sn-glycero-3-phosphoethanolamine + L-serine = a 1,2-diacyl-sn-glycero-3-phospho-L-serine + ethanolamine. It carries out the reaction a 1,2-diacyl-sn-glycero-3-phosphocholine + L-serine = a 1,2-diacyl-sn-glycero-3-phospho-L-serine + choline. It functions in the pathway phospholipid metabolism; phosphatidylserine biosynthesis. Its function is as follows. Catalyzes a base-exchange reaction in which the polar head group of phosphatidylethanolamine (PE) or phosphatidylcholine (PC) is replaced by L-serine. Catalyzes mainly the conversion of phosphatidylcholine but also converts, in vitro and to a lesser extent, phosphatidylethanolamine. The protein is Phosphatidylserine synthase 1 (PTDSS1) of Bos taurus (Bovine).